The primary structure comprises 117 residues: Large ribosomal subunit protein uL22 (117 aa).

It belongs to the universal ribosomal protein uL22 family. In terms of assembly, part of the 50S ribosomal subunit.

This protein binds specifically to 23S rRNA; its binding is stimulated by other ribosomal proteins, e.g. L4, L17, and L20. It is important during the early stages of 50S assembly. It makes multiple contacts with different domains of the 23S rRNA in the assembled 50S subunit and ribosome. In terms of biological role, the globular domain of the protein is located near the polypeptide exit tunnel on the outside of the subunit, while an extended beta-hairpin is found that lines the wall of the exit tunnel in the center of the 70S ribosome. This Lactobacillus gasseri (strain ATCC 33323 / DSM 20243 / BCRC 14619 / CIP 102991 / JCM 1131 / KCTC 3163 / NCIMB 11718 / NCTC 13722 / AM63) protein is Large ribosomal subunit protein uL22.